We begin with the raw amino-acid sequence, 338 residues long: DNA-directed RNA polymerase subunit alpha (338 aa).

The alpha N-terminal domain (alpha-NTD) stretch occupies residues 1–234 (MIHKNWQELI…DQLSIFVNFD (234 aa)). The interval 250–338 (FNPLLLKKVD…ELAKKYEDNF (89 aa)) is alpha C-terminal domain (alpha-CTD).

This sequence belongs to the RNA polymerase alpha chain family. Homodimer. The RNAP catalytic core consists of 2 alpha, 1 beta, 1 beta' and 1 omega subunit. When a sigma factor is associated with the core the holoenzyme is formed, which can initiate transcription.

The enzyme catalyses RNA(n) + a ribonucleoside 5'-triphosphate = RNA(n+1) + diphosphate. Functionally, DNA-dependent RNA polymerase catalyzes the transcription of DNA into RNA using the four ribonucleoside triphosphates as substrates. The sequence is that of DNA-directed RNA polymerase subunit alpha from Jannaschia sp. (strain CCS1).